Consider the following 214-residue polypeptide: Adenylate kinase (214 aa).

10-15 is a binding site for ATP; that stretch reads GAGKGT. Positions 30–59 are NMP; the sequence is STGDMLRSAVKAGTELGLKAKALMDHGKLV. Residues Thr31, Arg36, 57-59, 85-88, and Gln92 contribute to the AMP site; these read KLV and GFPR. An LID region spans residues 122 to 159; the sequence is GRRIHAPSGRVYHIKFNPPVVENKDDVTGEELTVRKDD. ATP contacts are provided by residues Arg123 and 132-133; that span reads VY. AMP is bound by residues Arg156 and Arg167. Position 200 (Arg200) interacts with ATP.

The protein belongs to the adenylate kinase family. In terms of assembly, monomer.

The protein resides in the cytoplasm. It carries out the reaction AMP + ATP = 2 ADP. It participates in purine metabolism; AMP biosynthesis via salvage pathway; AMP from ADP: step 1/1. Catalyzes the reversible transfer of the terminal phosphate group between ATP and AMP. Plays an important role in cellular energy homeostasis and in adenine nucleotide metabolism. In Photorhabdus laumondii subsp. laumondii (strain DSM 15139 / CIP 105565 / TT01) (Photorhabdus luminescens subsp. laumondii), this protein is Adenylate kinase.